Reading from the N-terminus, the 128-residue chain is MGKAYYVKFETPEDLVNPILEAVRVASTSGKVKKGTNEATKAIERGTSKLIVIAEDVEPPEVVAHLPILCEEQGAAFAFVPSKQELGKSLGIDITSAAAAILDAGDAQHIVDQVVSSIAKIKGGKTDQ.

The protein belongs to the eukaryotic ribosomal protein eL8 family. Part of the 50S ribosomal subunit. Probably part of the RNase P complex.

It localises to the cytoplasm. In terms of biological role, multifunctional RNA-binding protein that recognizes the K-turn motif in ribosomal RNA, the RNA component of RNase P, box H/ACA, box C/D and box C'/D' sRNAs. The polypeptide is Large ribosomal subunit protein eL8 (Nitrosopumilus maritimus (strain SCM1)).